The primary structure comprises 806 residues: Leucine--tRNA ligase (806 aa).

The short motif at 38–48 is the 'HIGH' region element; the sequence is PYPSGEIHMGH. A 'KMSKS' region motif is present at residues 572–576; that stretch reads KMSKS. Lys575 contributes to the ATP binding site.

It belongs to the class-I aminoacyl-tRNA synthetase family.

The protein localises to the cytoplasm. The enzyme catalyses tRNA(Leu) + L-leucine + ATP = L-leucyl-tRNA(Leu) + AMP + diphosphate. The polypeptide is Leucine--tRNA ligase (Helicobacter pylori (strain J99 / ATCC 700824) (Campylobacter pylori J99)).